The chain runs to 436 residues: MTNGNNNNLEFAELKIRGKLFKLPILKASIGKDVIDISRVSAEADYFTYDPGFMSTASCQSTITYIDGDKGILWYRGYDIKDLAEKSDFLEVAYLMIYGELPSSDQYCNFTKKVAHHSLVNERLHYLFQTFCSSSHPMAIMLAAVGSLSAFYPDLLNFNETDYELTAIRMIAKIPTIAAMSYKYSIGQPFIYPDNSLDFTENFLHMMFATPCTKYKVNPIIKNALNKIFILHADHEQNASTSTVRIAGSSGANPFACISTGIASLWGPAHGGANEAVINMLKEIGSSENIPKYVAKAKDKNDPFRLMGFGHRVYKSYDPRAAVLKETCKEVLNELGQLDNNPLLQIAIELEALALKDEYFIERKLYPNVDFYSGIIYKAMGIPSQMFTVLFAIARTVGWMAQWKEMHEDPEQKISRPRQLYTGYVHREYKCIVERK.

Catalysis depends on residues H311 and D370.

Belongs to the citrate synthase family. As to quaternary structure, homohexamer.

It carries out the reaction oxaloacetate + acetyl-CoA + H2O = citrate + CoA + H(+). The protein operates within carbohydrate metabolism; tricarboxylic acid cycle; isocitrate from oxaloacetate: step 1/2. Its activity is regulated as follows. Allosterically inhibited by NADH. The protein is Citrate synthase (gltA) of Rickettsia prowazekii (strain Madrid E).